We begin with the raw amino-acid sequence, 94 residues long: uncharacterized protein (94 aa).

The HTH cro/C1-type domain maps to 13 to 67; it reads IQESLDELNVSLREFARAMEIAPSTASRLLTGKAALTPEMAIKLSVVIGSSPQMW. A DNA-binding region (H-T-H motif) is located at residues 24-43; that stretch reads LREFARAMEIAPSTASRLLT.

Belongs to the VapA/VapI family.

This is an uncharacterized protein from Escherichia coli (strain K12).